Consider the following 272-residue polypeptide: Sulfate transporter CysZ (272 aa).

4 helical membrane passes run 29–49 (FVIMPIVLNTVLLCGLFWLFI), 66–86 (WLSFLSVILLILSILTILLLF), 148–168 (IIALFLLSFIPLVGQTIVPVL), and 219–239 (FVPVINLLIMPVAVCGATLMW).

It belongs to the CysZ family.

Its subcellular location is the cell inner membrane. Its function is as follows. High affinity, high specificity proton-dependent sulfate transporter, which mediates sulfate uptake. Provides the sulfur source for the cysteine synthesis pathway. This chain is Sulfate transporter CysZ, found in Haemophilus influenzae (strain ATCC 51907 / DSM 11121 / KW20 / Rd).